The following is a 527-amino-acid chain: F-box-like/WD repeat-containing protein TBL1X (527 aa).

N-acetylserine is present on Ser2. The LisH domain maps to 4-36 (TSDEVNFLVYRYLQESGFSHSAFTFGIESHISQ). In terms of domain architecture, F-box-like spans 41-86 (GTLVPPAALISILQKGLQYVEAEISINEDGTVFDGRPIESLSLIDA). Lys102 carries the N6-acetyllysine modification. Residues 127-164 (TTPAAAAQQNPPKNGEATVNGEENGAHAINNHSKPMEI) are disordered. WD repeat units follow at residues 180–219 (GHES…NGGS), 236–275 (PSNK…ASTL), 277–316 (QHKG…AKQQ), 319–359 (FHSA…KTFQ), 360–399 (GHTN…CVHD), 402–450 (AHSK…CIHT), 453–492 (KHQE…LVHS), and 494–526 (RGTG…LDLR). Lys290 participates in a covalent cross-link: Glycyl lysine isopeptide (Lys-Gly) (interchain with G-Cter in SUMO2).

The protein belongs to the WD repeat EBI family. In terms of assembly, homotetramer; dimer of dimers. Component of the N-Cor repressor complex, at least composed of NCOR1, NCOR2, HDAC3, TBL1X, TBL1R, CORO2A and GPS2. Component of a E3 ubiquitin ligase complex containing UBE2D1, SIAH1, CACYBP/SIP, SKP1, APC and TBL1X. Interacts with GPS2 (when sumoylated); leading to protect GPS2 against degradation by the proteasome. Probably part of other corepressor complexes, that do not contain NCOR1 and NCOR2. Interacts with histones H2B, H3a and H4. Interacts with MECP2; recruits TBL1X to the heterochromatin foci. Interacts with USP44. Expressed in the cochlea.

The protein resides in the nucleus. Functionally, F-box-like protein involved in the recruitment of the ubiquitin/19S proteasome complex to nuclear receptor-regulated transcription units. Plays an essential role in transcription activation mediated by nuclear receptors. Probably acts as integral component of corepressor complexes that mediates the recruitment of the 19S proteasome complex, leading to the subsequent proteasomal degradation of transcription repressor complexes, thereby allowing cofactor exchange. This Mus musculus (Mouse) protein is F-box-like/WD repeat-containing protein TBL1X (Tbl1x).